A 923-amino-acid chain; its full sequence is MSHYDFKAIEQKWQQYWKNNQIFRTTIEPSKPKYYILDMFPYPSGEGLHVGHPLGYIASDIVARYKRSKGYQVLHPMGFDAFGLPAEQFAIQTGQHPAITTAKNIGRYKQQLCQLGLSYDWDRCISTCEPAYYKWTQWIFIQLFNSWYDISLQKARPIDELITLFDQQGNQQVQASCDKEVSLFTAKEWQAMDEESKQQHLLAYRLAFLEDTTVNWCPELGTVLANEEVKDGLSERGGYPVIRKQMKQWSLRITAYTDRLLAGLEHLKWPLSTKEMQRNWIGRSIGAELNFTVIANGQEHTIPVFTTRPDTLFGVTYLALSPEHPLAKLISTGTQQAAIDTYITQATNRSERDRLADVNHVTGMFTGAYAIHPFTKQPLPIWIADYVLAGYGTGAVMGVPAHDSRDYAFAQHFQLPIIQVVAGGDTAQSAYEAREGSLFNSQFLNGLSIQEATKQAIQKLESLGIGKQKTTYRLRNAIFSRQRYWGEPIPIYYKNNIPYPIPAEELPLELPSLASFKPTPTGEPPLGHAPNWKTKEGYPIELSTMPGWAGSSWYFFRYMDPNNEASFVGSTAQNYWQAVDLYLGGAEHATGHLLYARFWTQFLYDLGYVNIEEPFQELIHQGMIQGKSSFVYRIKGTNQFVSYNLRHAYETTAMHVDIHLVKNNILDLERFKNWRPDLQTATFVLENGQYICGSEVEKMSKSKYNTVNPDTVVEQYGADTLRLYTMFLGPIEQAKPWDMHGIEGVFRFLVKVWRLFYLEKGAIITNEVPTKEVQKAIHKAIKKVEEDIKRYAFNTAVSNLMICVNELTALKCNNRAALTNLVLILAPFAPHLAEELWEILGHQHSIAQAPFPTYEEIYLQEETYEYPIAINGKVRAKINFPVDMPQGQIEEQVLTHESIQKWIQGQQIKRVIVISSKMVNIVI.

The 'HIGH' region signature appears at 41-52; it reads PYPSGEGLHVGH. The 'KMSKS' region signature appears at 698-702; sequence KMSKS. Position 701 (K701) interacts with ATP.

Belongs to the class-I aminoacyl-tRNA synthetase family.

The protein localises to the cytoplasm. The enzyme catalyses tRNA(Leu) + L-leucine + ATP = L-leucyl-tRNA(Leu) + AMP + diphosphate. The protein is Leucine--tRNA ligase of Amoebophilus asiaticus (strain 5a2).